Consider the following 201-residue polypeptide: 3-isopropylmalate dehydratase small subunit (201 aa).

This sequence belongs to the LeuD family. LeuD type 1 subfamily. In terms of assembly, heterodimer of LeuC and LeuD.

It catalyses the reaction (2R,3S)-3-isopropylmalate = (2S)-2-isopropylmalate. Its pathway is amino-acid biosynthesis; L-leucine biosynthesis; L-leucine from 3-methyl-2-oxobutanoate: step 2/4. In terms of biological role, catalyzes the isomerization between 2-isopropylmalate and 3-isopropylmalate, via the formation of 2-isopropylmaleate. The protein is 3-isopropylmalate dehydratase small subunit of Rhodopseudomonas palustris (strain HaA2).